Here is a 122-residue protein sequence, read N- to C-terminus: Large ribosomal subunit protein uL14 (122 aa).

Belongs to the universal ribosomal protein uL14 family. As to quaternary structure, part of the 50S ribosomal subunit. Forms a cluster with proteins L3 and L19. In the 70S ribosome, L14 and L19 interact and together make contacts with the 16S rRNA in bridges B5 and B8.

In terms of biological role, binds to 23S rRNA. Forms part of two intersubunit bridges in the 70S ribosome. The polypeptide is Large ribosomal subunit protein uL14 (Buchnera aphidicola subsp. Schizaphis graminum (strain Sg)).